We begin with the raw amino-acid sequence, 352 residues long: Phosphatidylglycerol--prolipoprotein diacylglyceryl transferase (352 aa).

The next 4 membrane-spanning stretches (helical) occupy residues 20–40, 55–75, 97–117, and 122–142; these read WYGLSYMMGFICAYILITWLA, FITYAAIGTLVGGRLGYVLFY, EGGMASHGGIIGIVIACLLYA, and VNSLYLLDLVAVTGPIGVFFG. A 1,2-diacyl-sn-glycero-3-phospho-(1'-sn-glycerol) is bound at residue Arg143. The next 3 membrane-spanning stretches (helical) occupy residues 248-268, 275-295, and 314-334; these read SQLFAAFGEGLLIFMFLFFLW, GFIAACFVLIYAVVRVVDEHF, and WLSLAMFVVGLILMVVWTRAA.

It belongs to the Lgt family.

It is found in the cell inner membrane. The enzyme catalyses L-cysteinyl-[prolipoprotein] + a 1,2-diacyl-sn-glycero-3-phospho-(1'-sn-glycerol) = an S-1,2-diacyl-sn-glyceryl-L-cysteinyl-[prolipoprotein] + sn-glycerol 1-phosphate + H(+). It participates in protein modification; lipoprotein biosynthesis (diacylglyceryl transfer). Its function is as follows. Catalyzes the transfer of the diacylglyceryl group from phosphatidylglycerol to the sulfhydryl group of the N-terminal cysteine of a prolipoprotein, the first step in the formation of mature lipoproteins. This Bdellovibrio bacteriovorus (strain ATCC 15356 / DSM 50701 / NCIMB 9529 / HD100) protein is Phosphatidylglycerol--prolipoprotein diacylglyceryl transferase.